We begin with the raw amino-acid sequence, 483 residues long: MSVTKSTEGPQGAVAIKLDLMSPPESAKKLENKDSTFLDESPSESAGLKKTKGITVFQALIHLVKGNMGTGILGLPLAVKNAGILMGPLSLLVMGFIACHCMHILVKCAQRFCKRLNKPFMDYGDTVMHGLEANPNAWLQNHAHWGRHIVSFFLIITQLGFCCVYIVFLADNLKQVVEAVNSTTNNCYSNETVILTPTMDSRLYMLSFLPFLVLLVLIRNLRILTIFSMLANISMLVSLVIIIQYITQEIPDPSRLPLVASWKTYPLFFGTAIFSFESIGVVLPLENKMKNARHFPAILSLGMSIVTSLYIGMAALGYLRFGDDIKASISLNLPNCWLYQSVKLLYIAGILCTYALQFYVPAEIIIPFAISRVSTRWALPLDLSIRLVMVCLTCLLAILIPRLDLVISLVGSVSGTALALIIPPLLEVTTFYSEGMSPLTIFKDALISILGFVGFVVGTYQALDELLKSEDSHPFSNSTTFVR.

Residues 1–58 are Cytoplasmic-facing; the sequence is MSVTKSTEGPQGAVAIKLDLMSPPESAKKLENKDSTFLDESPSESAGLKKTKGITVFQ. The segment covering 26–36 has biased composition (basic and acidic residues); it reads SAKKLENKDST. A disordered region spans residues 26–46; that stretch reads SAKKLENKDSTFLDESPSESA. The chain crosses the membrane as a helical span at residues 59–79; that stretch reads ALIHLVKGNMGTGILGLPLAV. Topologically, residues 80-81 are extracellular; that stretch reads KN. The helical transmembrane segment at 82-102 threads the bilayer; sequence AGILMGPLSLLVMGFIACHCM. At 103–148 the chain is on the cytoplasmic side; that stretch reads HILVKCAQRFCKRLNKPFMDYGDTVMHGLEANPNAWLQNHAHWGRH. The chain crosses the membrane as a helical span at residues 149-169; it reads IVSFFLIITQLGFCCVYIVFL. Over 170–197 the chain is Extracellular; the sequence is ADNLKQVVEAVNSTTNNCYSNETVILTP. Residues 198–218 form a helical membrane-spanning segment; sequence TMDSRLYMLSFLPFLVLLVLI. The Cytoplasmic segment spans residues 219 to 222; that stretch reads RNLR. Residues 223–243 form a helical membrane-spanning segment; that stretch reads ILTIFSMLANISMLVSLVIII. Residues 244–264 lie on the Extracellular side of the membrane; sequence QYITQEIPDPSRLPLVASWKT. Residues 265 to 285 form a helical membrane-spanning segment; it reads YPLFFGTAIFSFESIGVVLPL. At 286–296 the chain is on the cytoplasmic side; the sequence is ENKMKNARHFP. Residues 297–317 form a helical membrane-spanning segment; that stretch reads AILSLGMSIVTSLYIGMAALG. The Extracellular segment spans residues 318–349; the sequence is YLRFGDDIKASISLNLPNCWLYQSVKLLYIAG. The helical transmembrane segment at 350–370 threads the bilayer; that stretch reads ILCTYALQFYVPAEIIIPFAI. At 371-379 the chain is on the cytoplasmic side; the sequence is SRVSTRWAL. Residues 380–400 traverse the membrane as a helical segment; the sequence is PLDLSIRLVMVCLTCLLAILI. The Extracellular portion of the chain corresponds to 401-404; that stretch reads PRLD. The helical transmembrane segment at 405–425 threads the bilayer; sequence LVISLVGSVSGTALALIIPPL. Topologically, residues 426-437 are cytoplasmic; that stretch reads LEVTTFYSEGMS. A helical membrane pass occupies residues 438–458; that stretch reads PLTIFKDALISILGFVGFVVG. Residues 459 to 483 are Extracellular-facing; sequence TYQALDELLKSEDSHPFSNSTTFVR.

Belongs to the amino acid/polyamine transporter 2 family. In terms of tissue distribution, abundantly expressed in kidney and muscle. Expressed in the S1 segment of the proximal tubule close to the glomerulus.

The protein localises to the cell membrane. The protein resides in the endoplasmic reticulum membrane. It localises to the recycling endosome membrane. The enzyme catalyses glycine(in) + H(+)(in) = glycine(out) + H(+)(out). It catalyses the reaction L-alanine(in) + H(+)(in) = L-alanine(out) + H(+)(out). The catalysed reaction is D-alanine(in) + H(+)(in) = D-alanine(out) + H(+)(out). It carries out the reaction L-proline(out) + H(+)(out) = L-proline(in) + H(+)(in). The enzyme catalyses D-proline(out) + H(+)(out) = D-proline(in) + H(+)(in). It catalyses the reaction 4-hydroxy-L-proline(in) + H(+)(in) = 4-hydroxy-L-proline(out) + H(+)(out). The catalysed reaction is L-serine(in) + H(+)(in) = L-serine(out) + H(+)(out). It carries out the reaction D-serine(out) + H(+)(out) = D-serine(in) + H(+)(in). The enzyme catalyses beta-alanine(in) + H(+)(in) = beta-alanine(out) + H(+)(out). It catalyses the reaction 4-aminobutanoate(in) + H(+)(in) = 4-aminobutanoate(out) + H(+)(out). The catalysed reaction is sarcosine(in) + H(+)(in) = sarcosine(out) + H(+)(out). It carries out the reaction N,N-dimethylglycine(in) + H(+)(in) = N,N-dimethylglycine(out) + H(+)(out). Its function is as follows. Electrogenic proton/amino acid symporter with a high selectivity for the small side chains amino acids glycine, alanine and proline, where both L- and D-enantiomers are transported. Extension of the backbone length, as in beta-alanine and 4-aminobutanoate or methylation of the amino group, as in sarcosine and N,N-dimethylglycine, are also tolerated but decrease transport efficiency. A free carboxyl group is preferred. The chain is Proton-coupled amino acid transporter 2 from Homo sapiens (Human).